We begin with the raw amino-acid sequence, 384 residues long: Toluene efflux pump periplasmic linker protein TtgA (384 aa).

Positions 1 to 22 are cleaved as a signal peptide; that stretch reads MQFKPAVTALVSAVALATLLSG. The N-palmitoyl cysteine moiety is linked to residue C23. Residue C23 is the site of S-diacylglycerol cysteine attachment. Residues 115–155 are a coiled coil; that stretch reads LAERYKQLIDEQAVSKQEYDDANAKRLQAEASLKSAQIDLR. A disordered region spans residues 362-384; the sequence is ATNVKKPAGPDQANAAKADAKAE. Over residues 368 to 378 the composition is skewed to low complexity; sequence PAGPDQANAAK.

The protein belongs to the membrane fusion protein (MFP) (TC 8.A.1) family.

The protein resides in the cell inner membrane. The periplasmic linker protein component of a constitutive organic solvent efflux system. Involved in export of toluene, styrene, m-xylene, propylbenzene and ethylbenzene. Also exports AMP and the antibiotics carbenicillin, nalidixic acid, chloramphenicol and tetracycline. The protein is Toluene efflux pump periplasmic linker protein TtgA (ttgA) of Pseudomonas putida (strain DOT-T1E).